The sequence spans 121 residues: Small ribosomal subunit protein bS16 (121 aa).

Positions 88–121 (GKAKLEKEKKAKAKTKEEENEGSKTESGSNEAES) are disordered. Positions 90–111 (AKLEKEKKAKAKTKEEENEGSK) are enriched in basic and acidic residues. Over residues 112–121 (TESGSNEAES) the composition is skewed to polar residues.

It belongs to the bacterial ribosomal protein bS16 family.

The chain is Small ribosomal subunit protein bS16 from Prochlorococcus marinus (strain MIT 9215).